A 216-amino-acid chain; its full sequence is Large ribosomal subunit protein uL1z (216 aa).

Belongs to the universal ribosomal protein uL1 family. Interacts with the GTPase NUG2.

The protein is Large ribosomal subunit protein uL1z (RPL10AA) of Arabidopsis thaliana (Mouse-ear cress).